We begin with the raw amino-acid sequence, 106 residues long: MIPGEYHVKPGQIALNTGRATCRVVVENHGDRPIQVGSHYHFAEVNPALKFDRQQAAGYRLNIPAGTAVRFEPGQKREVELVAFAGHRAVFGFRGEVMGPLEVNDE.

It belongs to the urease beta subunit family. In terms of assembly, heterotrimer of UreA (gamma), UreB (beta) and UreC (alpha) subunits. Three heterotrimers associate to form the active enzyme. The apoenzyme interacts with an accessory complex composed of UreD, UreF and UreG, which is required for the assembly of the nickel containing metallocenter of UreC. The UreE protein may also play a direct role as a metallochaperone in nickel transfer to the urease apoprotein.

Its subcellular location is the cytoplasm. It carries out the reaction urea + 2 H2O + H(+) = hydrogencarbonate + 2 NH4(+). It functions in the pathway nitrogen metabolism; urea degradation; CO(2) and NH(3) from urea (urease route): step 1/1. Its activity is regulated as follows. The apoenzyme can be activated in vitro in the presence of nickel ions and carbon dioxide, which promotes carboxylation of 'Lys-217' of the UreC (alpha) subunit. The polypeptide is Urease subunit beta (Klebsiella aerogenes (Enterobacter aerogenes)).